The sequence spans 120 residues: Large ribosomal subunit protein uL18 (120 aa).

It belongs to the universal ribosomal protein uL18 family. As to quaternary structure, part of the 50S ribosomal subunit; part of the 5S rRNA/L5/L18/L25 subcomplex. Contacts the 5S and 23S rRNAs.

Functionally, this is one of the proteins that bind and probably mediate the attachment of the 5S RNA into the large ribosomal subunit, where it forms part of the central protuberance. The protein is Large ribosomal subunit protein uL18 of Rhodopseudomonas palustris (strain BisB5).